A 515-amino-acid chain; its full sequence is MAPNFPPIEEALPLHHDLFYDGKWQTPITDSRRETLNPSTGQVIGKIADASTTDVDKAVEAAHKAFLSWKKTTMAERQGYMRRAAAILREHAAELALVESYNTGNPVAAMVIDAERAANALDYFAGLIPMLRGEVLPGPFPTEDYLHYTVREPMGVVARFVASNHPFMFAGARMASVIAGGNTVIIKPPEQAPLSCLRLAELLENVFPPGVVNILPGGAECGQALTCHPLVRKVSLIGSVATGKIIMRNAGSLMKQTSMELGGKNALIAFPDADIDHLVRSVAAGMNFTWAGQSCGSTSRVFLHDSIHDEVLARVVEVVRKGFRPGLATDPTTTMGSLISKAAQDRVLNYIASAREEGARLVTGGGMFDDLAGTPVEGGFFVQPTIFADVTPDMKIAREEIFGPVMSVLRWSDESELIRIVNSTNYGLTGSIFTKDLATAQRMIRQVEAGFVWVNDVCKHFLNVPYGGIKDSGIGRDECIDELFAYTNIKSVNINLGGATHLGSRLSQAGQISNT.

Gly238 to Gly243 lines the NAD(+) pocket. The active-site Proton acceptor is the Glu260. Residue Cys295 is the Nucleophile of the active site.

Belongs to the aldehyde dehydrogenase family.

The catalysed reaction is an aldehyde + NAD(+) + H2O = a carboxylate + NADH + 2 H(+). It functions in the pathway secondary metabolite biosynthesis. Aldehyde dehydrogenase; part of the gene cluster that mediates the biosynthesis of the tropolone class of fungal maleic anhydrides. The pathway begins with the synthesis of 3-methylorcinaldehyde by the non-reducing polyketide synthase (PKS) tropA. 3-methylorcinaldehyde is the substrate for the FAD-dependent monooxygenase tropB to yield a dearomatized hydroxycyclohexadione. The 2-oxoglutarate-dependent dioxygenase tropC then performs the oxidative ring expansion to provide the first tropolone metabolite stipitaldehyde. Trop D converts stipitaldehyde into stipitacetal which is in turn converted to stipitalide by the short-chain dehydrogenase/reductase tropE. The next steps involve tropF, tropG, tropH, tropI and tropJ to form successive tropolone maleic anhydrides including stipitaldehydic, stipitatonic and stipitatic acids. This chain is Aldehyde dehydrogenase tropH, found in Talaromyces stipitatus (strain ATCC 10500 / CBS 375.48 / QM 6759 / NRRL 1006) (Penicillium stipitatum).